The primary structure comprises 248 residues: Type III pantothenate kinase (248 aa).

Aspartate 6–lysine 13 lines the ATP pocket. Substrate is bound at residue glycine 103 to arginine 106. Aspartate 105 acts as the Proton acceptor in catalysis. Aspartate 124 is a K(+) binding site. ATP is bound at residue threonine 127. Threonine 178 contacts substrate.

This sequence belongs to the type III pantothenate kinase family. As to quaternary structure, homodimer. It depends on NH4(+) as a cofactor. Requires K(+) as cofactor.

Its subcellular location is the cytoplasm. It carries out the reaction (R)-pantothenate + ATP = (R)-4'-phosphopantothenate + ADP + H(+). It functions in the pathway cofactor biosynthesis; coenzyme A biosynthesis; CoA from (R)-pantothenate: step 1/5. Its function is as follows. Catalyzes the phosphorylation of pantothenate (Pan), the first step in CoA biosynthesis. This Pelagibacter ubique (strain HTCC1062) protein is Type III pantothenate kinase.